The primary structure comprises 231 residues: Large ribosomal subunit protein uL1 (231 aa).

Belongs to the universal ribosomal protein uL1 family. As to quaternary structure, part of the 50S ribosomal subunit.

Its function is as follows. Binds directly to 23S rRNA. The L1 stalk is quite mobile in the ribosome, and is involved in E site tRNA release. Protein L1 is also a translational repressor protein, it controls the translation of the L11 operon by binding to its mRNA. The polypeptide is Large ribosomal subunit protein uL1 (Azotobacter vinelandii (strain DJ / ATCC BAA-1303)).